We begin with the raw amino-acid sequence, 403 residues long: Phosphoglycerate kinase (403 aa).

Residues 24–26 (DLN), R39, 62–65 (HLGR), R121, and R161 contribute to the substrate site. Residues K211, G299, E330, and 359–362 (GGDS) contribute to the ATP site.

The protein belongs to the phosphoglycerate kinase family. Monomer.

It localises to the cytoplasm. The catalysed reaction is (2R)-3-phosphoglycerate + ATP = (2R)-3-phospho-glyceroyl phosphate + ADP. It functions in the pathway carbohydrate degradation; glycolysis; pyruvate from D-glyceraldehyde 3-phosphate: step 2/5. This is Phosphoglycerate kinase from Corynebacterium kroppenstedtii (strain DSM 44385 / JCM 11950 / CIP 105744 / CCUG 35717).